A 188-amino-acid polypeptide reads, in one-letter code: Elongation factor P (188 aa).

Lys-34 is modified (N6-(3,6-diaminohexanoyl)-5-hydroxylysine).

Belongs to the elongation factor P family. In terms of processing, may be beta-lysylated on the epsilon-amino group of Lys-34 by the combined action of EpmA and EpmB, and then hydroxylated on the C5 position of the same residue by EpmC (if this protein is present). Lysylation is critical for the stimulatory effect of EF-P on peptide-bond formation. The lysylation moiety may extend toward the peptidyltransferase center and stabilize the terminal 3-CCA end of the tRNA. Hydroxylation of the C5 position on Lys-34 may allow additional potential stabilizing hydrogen-bond interactions with the P-tRNA.

The protein localises to the cytoplasm. Its pathway is protein biosynthesis; polypeptide chain elongation. In terms of biological role, involved in peptide bond synthesis. Alleviates ribosome stalling that occurs when 3 or more consecutive Pro residues or the sequence PPG is present in a protein, possibly by augmenting the peptidyl transferase activity of the ribosome. Modification of Lys-34 is required for alleviation. The sequence is that of Elongation factor P from Photorhabdus laumondii subsp. laumondii (strain DSM 15139 / CIP 105565 / TT01) (Photorhabdus luminescens subsp. laumondii).